We begin with the raw amino-acid sequence, 188 residues long: Pyridoxal 5'-phosphate synthase subunit PdxT (188 aa).

46 to 48 contributes to the L-glutamine binding site; it reads GES. Catalysis depends on Cys78, which acts as the Nucleophile. L-glutamine is bound by residues Arg105 and 134–135; that span reads IR. Active-site charge relay system residues include His170 and Glu172.

Belongs to the glutaminase PdxT/SNO family. In the presence of PdxS, forms a dodecamer of heterodimers. Only shows activity in the heterodimer.

It catalyses the reaction aldehydo-D-ribose 5-phosphate + D-glyceraldehyde 3-phosphate + L-glutamine = pyridoxal 5'-phosphate + L-glutamate + phosphate + 3 H2O + H(+). The enzyme catalyses L-glutamine + H2O = L-glutamate + NH4(+). Its pathway is cofactor biosynthesis; pyridoxal 5'-phosphate biosynthesis. Functionally, catalyzes the hydrolysis of glutamine to glutamate and ammonia as part of the biosynthesis of pyridoxal 5'-phosphate. The resulting ammonia molecule is channeled to the active site of PdxS. The chain is Pyridoxal 5'-phosphate synthase subunit PdxT from Thermotoga neapolitana (strain ATCC 49049 / DSM 4359 / NBRC 107923 / NS-E).